We begin with the raw amino-acid sequence, 166 residues long: Transcription antitermination protein NusB (166 aa).

The protein belongs to the NusB family.

Its function is as follows. Involved in transcription antitermination. Required for transcription of ribosomal RNA (rRNA) genes. Binds specifically to the boxA antiterminator sequence of the ribosomal RNA (rrn) operons. In Chromohalobacter salexigens (strain ATCC BAA-138 / DSM 3043 / CIP 106854 / NCIMB 13768 / 1H11), this protein is Transcription antitermination protein NusB.